The chain runs to 233 residues: 7-cyano-7-deazaguanine synthase (233 aa).

7 to 17 (LSGGLDSAVTS) is an ATP binding site. Residues cysteine 195, cysteine 206, cysteine 209, and cysteine 212 each coordinate Zn(2+).

The protein belongs to the QueC family. Zn(2+) is required as a cofactor.

The enzyme catalyses 7-carboxy-7-deazaguanine + NH4(+) + ATP = 7-cyano-7-deazaguanine + ADP + phosphate + H2O + H(+). Its pathway is purine metabolism; 7-cyano-7-deazaguanine biosynthesis. Functionally, catalyzes the ATP-dependent conversion of 7-carboxy-7-deazaguanine (CDG) to 7-cyano-7-deazaguanine (preQ(0)). The polypeptide is 7-cyano-7-deazaguanine synthase (Methanococcus maripaludis (strain C7 / ATCC BAA-1331)).